A 554-amino-acid chain; its full sequence is Protein PNS1 (554 aa).

Low complexity-rich tracts occupy residues 1-19 (MSGP…NNNN) and 27-45 (SYQM…QPQY). A disordered region spans residues 1–90 (MSGPQYGAQP…TDGYGGPPPS (90 aa)). Residues 1-105 (MSGPQYGAQP…KVQKPKYNDW (105 aa)) lie on the Cytoplasmic side of the membrane. Residues 68–90 (PQGPPPNGSKPPPTDGYGGPPPS) show a composition bias toward pro residues. A helical transmembrane segment spans residues 106 to 126 (WAGLLFLATVAGFVAVSAISI). Over 127 to 153 (HGYADNRSQNNGSLNGQRNTFGLTTHT) the chain is Extracellular. N-linked (GlcNAc...) asparagine glycosylation is found at asparagine 132 and asparagine 137. The chain crosses the membrane as a helical span at residues 154–174 (IYLFVWVLICAIVLSYAYMWM). Residues 175-181 (ARKFTKQ) lie on the Cytoplasmic side of the membrane. The chain crosses the membrane as a helical span at residues 182–202 (FIYATGILNIVMGLVTALYML). Residues 203-206 (SRKY) lie on the Extracellular side of the membrane. A helical membrane pass occupies residues 207-227 (WSGGIVFLIFVVLQALFFWSC). Residues 228–255 (RSRIPFSTLMLQTAIDVSKVHGHVYLVS) lie on the Cytoplasmic side of the membrane. Residues 256 to 276 (AVGGVIGTLFAAYWAITLVAV) form a helical membrane-spanning segment. Topologically, residues 277-297 (YVKFEPDPNNAACRNAGGCSS) are extracellular. A helical transmembrane segment spans residues 298 to 318 (GKVIGLIVFITFAGYWISEWL). Residues 319–352 (KNTIHTTVAGIYGSWYFNSRNYPTKVTRGALKRS) lie on the Cytoplasmic side of the membrane. A helical membrane pass occupies residues 353 to 373 (LTYSFGSISLGSLFIAIINLI). The Extracellular segment spans residues 374-389 (RQLAQAAQQNAAQEGD). Residues 390-410 (ILGTILWCIFGCLIGILDWLV) traverse the membrane as a helical segment. Residues 411-451 (EFINRYAFCHIALYGKAYFAAAKDTWKMVKDRGIDALINEC) are Cytoplasmic-facing. A helical transmembrane segment spans residues 452-472 (LIGPVLTFGATFVAYACGLIA). At 473–487 (YLYMVYTKPAYNDGG) the chain is on the extracellular side. A helical transmembrane segment spans residues 488-508 (GFTPVVVAFAFLIGLQVCNVF). Over 509-554 (TTPLTSGIDTIFVAMAWDPEVLMRDHPDLYHRMVQVYPHVQEAIHA) the chain is Cytoplasmic.

Belongs to the CTL (choline transporter-like) family.

It localises to the cell membrane. Functionally, probably involved in transport through the plasma membrane. The sequence is that of Protein PNS1 (pns-1) from Neurospora crassa (strain ATCC 24698 / 74-OR23-1A / CBS 708.71 / DSM 1257 / FGSC 987).